Consider the following 415-residue polypeptide: Runt-related transcription factor 3 (415 aa).

3 disordered regions span residues 1-48, 176-266, and 375-415; these read MRIP…GGRA, GPRE…FPDP, and NLMN…WRPY. Residues 54 to 182 enclose the Runt domain; that stretch reads SMVDVLADHA…TVDGPREPRR (129 aa). Basic and acidic residues predominate over residues 186–205; it reads KLEDQTKPFPDRFGDLERLR. Lysine 192 participates in a covalent cross-link: Glycyl lysine isopeptide (Lys-Gly) (interchain with G-Cter in SUMO2). Polar residues predominate over residues 209 to 240; sequence TPSTPSPRGSLSTTSHFSSQPQTPIQGTSELN. At serine 243 the chain carries Phosphoserine. Positions 393 to 402 are enriched in polar residues; it reads SHSNSPTALS. Positions 406–415 are enriched in basic and acidic residues; it reads RMDEAVWRPY.

In terms of assembly, heterodimer with CBFB. RUNX3 binds DNA as a monomer and through the Runt domain. DNA-binding is increased by heterodimerization. Interacts with TLE1 and SUV39H1. The tyrosine phosphorylated form (via runt domain) interacts with SRC (via protein kinase domain). Interacts with FYN and LCK. Interacts with FOXP3. Interacts with ZFHX3. Interacts with TBX21. Phosphorylated on tyrosine residues by SRC. Phosphorylated by LCK and FYN. As to expression, expressed in gastric cancer tissues (at protein level).

The protein localises to the nucleus. Its subcellular location is the cytoplasm. Functionally, forms the heterodimeric complex core-binding factor (CBF) with CBFB. RUNX members modulate the transcription of their target genes through recognizing the core consensus binding sequence 5'-TGTGGT-3', or very rarely, 5'-TGCGGT-3', within their regulatory regions via their runt domain, while CBFB is a non-DNA-binding regulatory subunit that allosterically enhances the sequence-specific DNA-binding capacity of RUNX. The heterodimers bind to the core site of a number of enhancers and promoters, including murine leukemia virus, polyomavirus enhancer, T-cell receptor enhancers, LCK, IL3 and GM-CSF promoters. May be involved in the control of cellular proliferation and/or differentiation. In association with ZFHX3, up-regulates CDKN1A promoter activity following TGF-beta stimulation. CBF complexes repress ZBTB7B transcription factor during cytotoxic (CD8+) T cell development. They bind to RUNX-binding sequence within the ZBTB7B locus acting as transcriptional silencer and allowing for cytotoxic T cell differentiation. CBF complexes binding to the transcriptional silencer is essential for recruitment of nuclear protein complexes that catalyze epigenetic modifications to establish epigenetic ZBTB7B silencing. Necessary for the development and survival of sensory neurons expressing parvalbumin. The sequence is that of Runt-related transcription factor 3 (RUNX3) from Homo sapiens (Human).